Reading from the N-terminus, the 346-residue chain is Uroporphyrinogen decarboxylase (346 aa).

Substrate-binding positions include 23 to 27 (RQAGR), D73, Y151, S206, and H321.

It belongs to the uroporphyrinogen decarboxylase family. As to quaternary structure, homodimer.

The protein localises to the cytoplasm. The catalysed reaction is uroporphyrinogen III + 4 H(+) = coproporphyrinogen III + 4 CO2. Its pathway is porphyrin-containing compound metabolism; protoporphyrin-IX biosynthesis; coproporphyrinogen-III from 5-aminolevulinate: step 4/4. Catalyzes the decarboxylation of four acetate groups of uroporphyrinogen-III to yield coproporphyrinogen-III. The sequence is that of Uroporphyrinogen decarboxylase from Sulfurovum sp. (strain NBC37-1).